We begin with the raw amino-acid sequence, 179 residues long: Large ribosomal subunit protein uL5 (179 aa).

Belongs to the universal ribosomal protein uL5 family. Part of the 50S ribosomal subunit; part of the 5S rRNA/L5/L18/L25 subcomplex. Contacts the 5S rRNA and the P site tRNA. Forms a bridge to the 30S subunit in the 70S ribosome.

In terms of biological role, this is one of the proteins that bind and probably mediate the attachment of the 5S RNA into the large ribosomal subunit, where it forms part of the central protuberance. In the 70S ribosome it contacts protein S13 of the 30S subunit (bridge B1b), connecting the 2 subunits; this bridge is implicated in subunit movement. Contacts the P site tRNA; the 5S rRNA and some of its associated proteins might help stabilize positioning of ribosome-bound tRNAs. The protein is Large ribosomal subunit protein uL5 of Bordetella avium (strain 197N).